Consider the following 243-residue polypeptide: 1-(5-phosphoribosyl)-5-[(5-phosphoribosylamino)methylideneamino] imidazole-4-carboxamide isomerase (243 aa).

The active-site Proton acceptor is D8. The Proton donor role is filled by D129.

This sequence belongs to the HisA/HisF family.

The protein localises to the cytoplasm. The catalysed reaction is 1-(5-phospho-beta-D-ribosyl)-5-[(5-phospho-beta-D-ribosylamino)methylideneamino]imidazole-4-carboxamide = 5-[(5-phospho-1-deoxy-D-ribulos-1-ylimino)methylamino]-1-(5-phospho-beta-D-ribosyl)imidazole-4-carboxamide. Its pathway is amino-acid biosynthesis; L-histidine biosynthesis; L-histidine from 5-phospho-alpha-D-ribose 1-diphosphate: step 4/9. This chain is 1-(5-phosphoribosyl)-5-[(5-phosphoribosylamino)methylideneamino] imidazole-4-carboxamide isomerase, found in Brucella suis biovar 1 (strain 1330).